The sequence spans 876 residues: Alanine--tRNA ligase (876 aa).

Residues H565, H569, C667, and H671 each coordinate Zn(2+).

Belongs to the class-II aminoacyl-tRNA synthetase family. It depends on Zn(2+) as a cofactor.

The protein resides in the cytoplasm. The catalysed reaction is tRNA(Ala) + L-alanine + ATP = L-alanyl-tRNA(Ala) + AMP + diphosphate. Its function is as follows. Catalyzes the attachment of alanine to tRNA(Ala) in a two-step reaction: alanine is first activated by ATP to form Ala-AMP and then transferred to the acceptor end of tRNA(Ala). Also edits incorrectly charged Ser-tRNA(Ala) and Gly-tRNA(Ala) via its editing domain. This Staphylococcus aureus (strain USA300) protein is Alanine--tRNA ligase.